Consider the following 866-residue polypeptide: Probable beta-glucosidase F (866 aa).

A signal peptide spans 1-20 (MAAFPAYLALLSYLVPGALS). Asparagine 65, asparagine 73, and asparagine 257 each carry an N-linked (GlcNAc...) asparagine glycan. Aspartate 285 is a catalytic residue. 8 N-linked (GlcNAc...) asparagine glycosylation sites follow: asparagine 328, asparagine 360, asparagine 395, asparagine 421, asparagine 474, asparagine 659, asparagine 664, and asparagine 724. A disordered region spans residues 725–748 (SSKTYPYPDGYTTEPKPAPRAGGA).

This sequence belongs to the glycosyl hydrolase 3 family.

It is found in the secreted. It carries out the reaction Hydrolysis of terminal, non-reducing beta-D-glucosyl residues with release of beta-D-glucose.. The protein operates within glycan metabolism; cellulose degradation. Functionally, beta-glucosidases are one of a number of cellulolytic enzymes involved in the degradation of cellulosic biomass. Catalyzes the last step releasing glucose from the inhibitory cellobiose. The chain is Probable beta-glucosidase F (bglF) from Aspergillus flavus (strain ATCC 200026 / FGSC A1120 / IAM 13836 / NRRL 3357 / JCM 12722 / SRRC 167).